We begin with the raw amino-acid sequence, 72 residues long: Hypertrehalosaemic prohormone (72 aa).

The first 21 residues, 1–21 (MNHLVKVLIVVVAIALVLCEA), serve as a signal peptide directing secretion. Gln22 is modified (pyrrolidone carboxylic acid). Thr31 bears the Threonine amide mark.

This sequence belongs to the AKH/HRTH/RPCH family. Expressed in corpora cardiaca.

Its subcellular location is the secreted. In terms of biological role, hypertrehalosaemic factors are neuropeptides that elevate the level of trehalose in the hemolymph (trehalose is the major carbohydrate in the hemolymph of insects). In Blaberus discoidalis (Tropical cockroach), this protein is Hypertrehalosaemic prohormone.